The following is a 259-amino-acid chain: BTB/POZ domain-containing protein KCTD4 (259 aa).

Residues 1-25 form a disordered region; that stretch reads MERKINRREKEKEYEGKHNSLEDTD. The BTB domain maps to 33–134; that stretch reads TLMTLNVGGY…EVKSRWEKEQ (102 aa).

The polypeptide is BTB/POZ domain-containing protein KCTD4 (KCTD4) (Homo sapiens (Human)).